A 122-amino-acid chain; its full sequence is UPF0102 protein CPF_1959 (122 aa).

This sequence belongs to the UPF0102 family.

The sequence is that of UPF0102 protein CPF_1959 from Clostridium perfringens (strain ATCC 13124 / DSM 756 / JCM 1290 / NCIMB 6125 / NCTC 8237 / Type A).